The sequence spans 160 residues: Urease accessory protein UreE (160 aa).

This sequence belongs to the UreE family.

It is found in the cytoplasm. Functionally, involved in urease metallocenter assembly. Binds nickel. Probably functions as a nickel donor during metallocenter assembly. This chain is Urease accessory protein UreE, found in Acinetobacter baumannii (strain ACICU).